The following is a 431-amino-acid chain: Enolase (431 aa).

Gln167 is a binding site for (2R)-2-phosphoglycerate. Catalysis depends on Glu209, which acts as the Proton donor. Mg(2+) contacts are provided by Asp246, Glu289, and Asp316. (2R)-2-phosphoglycerate-binding residues include Lys341, Arg370, Ser371, and Lys392. Catalysis depends on Lys341, which acts as the Proton acceptor.

This sequence belongs to the enolase family. Component of the RNA degradosome, a multiprotein complex involved in RNA processing and mRNA degradation. Requires Mg(2+) as cofactor.

It is found in the cytoplasm. Its subcellular location is the secreted. It localises to the cell surface. It carries out the reaction (2R)-2-phosphoglycerate = phosphoenolpyruvate + H2O. Its pathway is carbohydrate degradation; glycolysis; pyruvate from D-glyceraldehyde 3-phosphate: step 4/5. Catalyzes the reversible conversion of 2-phosphoglycerate (2-PG) into phosphoenolpyruvate (PEP). It is essential for the degradation of carbohydrates via glycolysis. The sequence is that of Enolase from Shewanella sediminis (strain HAW-EB3).